The chain runs to 158 residues: Putative zinc-binding protein ORF9 (158 aa).

The RING-type; degenerate zinc-finger motif lies at 72–111; that stretch reads CPVCGRAVVGPTVREACGHVTCNACETEACAVDRLCIGGG. A disordered region spans residues 126-158; that stretch reads GPRWRGPRPTRPEAHEAVQRSRGSSEDACTCAP. Residues 135-150 show a composition bias toward basic and acidic residues; the sequence is TRPEAHEAVQRSRGSS.

This is Putative zinc-binding protein ORF9 (ORF9) from Ictalurid herpesvirus 1 (strain Auburn) (IcHV-1).